The sequence spans 165 residues: Large ribosomal subunit protein uL10 (165 aa).

The protein belongs to the universal ribosomal protein uL10 family. As to quaternary structure, part of the ribosomal stalk of the 50S ribosomal subunit. The N-terminus interacts with L11 and the large rRNA to form the base of the stalk. The C-terminus forms an elongated spine to which L12 dimers bind in a sequential fashion forming a multimeric L10(L12)X complex.

Functionally, forms part of the ribosomal stalk, playing a central role in the interaction of the ribosome with GTP-bound translation factors. The polypeptide is Large ribosomal subunit protein uL10 (Burkholderia ambifaria (strain MC40-6)).